A 155-amino-acid chain; its full sequence is Regulatory protein RecX (155 aa).

This sequence belongs to the RecX family.

The protein resides in the cytoplasm. Its function is as follows. Modulates RecA activity. The polypeptide is Regulatory protein RecX (Pseudomonas entomophila (strain L48)).